Consider the following 149-residue polypeptide: Calmodulin (149 aa).

4 EF-hand domains span residues 8–43 (EQIA…LGQN), 44–79 (PTEA…KMAD), 81–116 (DTEE…LGEK), and 117–149 (LSDE…MLSK). Residues D21, D23, D25, N27, E32, D57, D59, N61, T63, E68, D94, D96, N98, and E105 each contribute to the Ca(2+) site. Position 116 is an N6,N6,N6-trimethyllysine (K116). The Ca(2+) site is built by D130, D132, D134, Q136, and E141.

The protein belongs to the calmodulin family.

In terms of biological role, calmodulin mediates the control of a large number of enzymes, ion channels and other proteins by Ca(2+). Among the enzymes to be stimulated by the calmodulin-Ca(2+) complex are a number of protein kinases and phosphatases. In Physarum polycephalum (Slime mold), this protein is Calmodulin.